The primary structure comprises 338 residues: Glycerol-3-phosphate dehydrogenase [NAD(P)+] (338 aa).

Positions 13, 14, and 108 each coordinate NADPH. 3 residues coordinate sn-glycerol 3-phosphate: K108, G139, and S141. A143 is an NADPH binding site. Residues K194, D247, S257, R258, and N259 each contribute to the sn-glycerol 3-phosphate site. K194 (proton acceptor) is an active-site residue. An NADPH-binding site is contributed by R258. NADPH-binding residues include V282 and E284.

Belongs to the NAD-dependent glycerol-3-phosphate dehydrogenase family.

It is found in the cytoplasm. It carries out the reaction sn-glycerol 3-phosphate + NAD(+) = dihydroxyacetone phosphate + NADH + H(+). The enzyme catalyses sn-glycerol 3-phosphate + NADP(+) = dihydroxyacetone phosphate + NADPH + H(+). Its pathway is membrane lipid metabolism; glycerophospholipid metabolism. Catalyzes the reduction of the glycolytic intermediate dihydroxyacetone phosphate (DHAP) to sn-glycerol 3-phosphate (G3P), the key precursor for phospholipid synthesis. The protein is Glycerol-3-phosphate dehydrogenase [NAD(P)+] of Streptococcus pneumoniae (strain CGSP14).